The sequence spans 104 residues: Ig lambda-3 chain C region (104 aa).

Residues proline 6–serine 99 enclose the Ig-like domain. Cysteines 27 and 85 form a disulfide.

The sequence is that of Ig lambda-3 chain C region (Iglc3) from Mus musculus (Mouse).